Reading from the N-terminus, the 62-residue chain is Photosystem II reaction center protein Z (62 aa).

The next 2 helical transmembrane spans lie at 8 to 28 (SVFALITISFLLVIGVPVVLA) and 41 to 61 (FSGASLWIGLVFLVGILNSLI).

This sequence belongs to the PsbZ family. PSII is composed of 1 copy each of membrane proteins PsbA, PsbB, PsbC, PsbD, PsbE, PsbF, PsbH, PsbI, PsbJ, PsbK, PsbL, PsbM, PsbT, PsbY, PsbZ, Psb30/Ycf12, at least 3 peripheral proteins of the oxygen-evolving complex and a large number of cofactors. It forms dimeric complexes.

It localises to the plastid. The protein localises to the chloroplast thylakoid membrane. May control the interaction of photosystem II (PSII) cores with the light-harvesting antenna, regulates electron flow through the 2 photosystem reaction centers. PSII is a light-driven water plastoquinone oxidoreductase, using light energy to abstract electrons from H(2)O, generating a proton gradient subsequently used for ATP formation. This is Photosystem II reaction center protein Z from Psilotum nudum (Whisk fern).